We begin with the raw amino-acid sequence, 287 residues long: Phospholipid phosphatase 2 (287 aa).

Residues 1-4 (MERR) are Cytoplasmic-facing. The helical transmembrane segment at 5-25 (WVFVLLDVLCVLVAALPCAIL) threads the bilayer. The Lumenal segment spans residues 26-51 (TFVNTPYKRGFYCGDDSIRYPYRPDT). The chain crosses the membrane as a helical span at residues 52–72 (ITHGLMAGVIITATVILVSAG). Over 73 to 87 (EAYLVYTDRLYSRSD) the chain is Cytoplasmic. The helical transmembrane segment at 88–108 (FNNYLAALYKVVGTFLFGAAV) threads the bilayer. Topologically, residues 109-161 (SQSLTDLAKYMTGRLRPNFLAVCDPDWSRVNCSAYVQVEVCRGSSANVTESRL) are lumenal. Residues 117–125 (KYMTGRLRP) are phosphatase sequence motif I. Asparagine 139 and asparagine 155 each carry an N-linked (GlcNAc...) asparagine glycan. A helical transmembrane segment spans residues 162–182 (SFYSGHSSFGMYCMVFLALYV). A phosphatase sequence motif II region spans residues 164-167 (YSGH). Histidine 167 (proton donors) is an active-site residue. At 183-193 (QARLCWKWARL) the chain is on the cytoplasmic side. The helical transmembrane segment at 194 to 211 (LRPTVQFFLVAFALYVGY) threads the bilayer. The Lumenal segment spans residues 212–218 (TRVSDHK). Positions 212–223 (TRVSDHKHHWSD) are phosphatase sequence motif III. Residue histidine 219 is the Nucleophile of the active site. A helical membrane pass occupies residues 219–239 (HHWSDVLVGLLQGALVASLTV). The Cytoplasmic portion of the chain corresponds to 240-287 (RYISDFFKARPPQHCPEEEDLERKPSLSLTLALGETDCNHYGYPVSSS).

The protein belongs to the PA-phosphatase related phosphoesterase family. In terms of assembly, forms functional homodimers and homooligomers. Can also form heterooligomers with PLPP1 and PLPP3. Post-translationally, N-glycosylated.

It is found in the membrane. The protein resides in the cell membrane. It localises to the early endosome membrane. The protein localises to the endoplasmic reticulum membrane. The enzyme catalyses a 1,2-diacyl-sn-glycero-3-phosphate + H2O = a 1,2-diacyl-sn-glycerol + phosphate. It carries out the reaction 1,2-dihexadecanoyl-sn-glycero-3-phosphate + H2O = 1,2-dihexadecanoyl-sn-glycerol + phosphate. It catalyses the reaction 1,2-di-(9Z-octadecenoyl)-sn-glycero-3-phosphate + H2O = 1,2-di-(9Z-octadecenoyl)-sn-glycerol + phosphate. The catalysed reaction is a monoacyl-sn-glycero-3-phosphate + H2O = a monoacylglycerol + phosphate. The enzyme catalyses (9Z)-octadecenoyl-sn-glycero-3-phosphate + H2O = (9Z-octadecenoyl)-glycerol + phosphate. It carries out the reaction sphing-4-enine 1-phosphate + H2O = sphing-4-enine + phosphate. It catalyses the reaction an N-acylsphing-4-enine 1-phosphate + H2O = an N-acylsphing-4-enine + phosphate. The catalysed reaction is N-(octanoyl)-sphing-4-enine-1-phosphate + H2O = N-octanoylsphing-4-enine + phosphate. The enzyme catalyses N-(9Z-octadecenoyl)-ethanolamine phosphate + H2O = N-(9Z-octadecenoyl) ethanolamine + phosphate. Its pathway is lipid metabolism; phospholipid metabolism. With respect to regulation, magnesium-independent phospholipid phosphatase. Insensitive to N-ethylmaleimide. Its function is as follows. Magnesium-independent phospholipid phosphatase that catalyzes the dephosphorylation of a variety of glycerolipid and sphingolipid phosphate esters including phosphatidate/PA, lysophosphatidate/LPA, sphingosine 1-phosphate/S1P and ceramide 1-phosphate/C1P. Has no apparent extracellular phosphatase activity and therefore most probably acts intracellularly. Also acts on N-oleoyl ethanolamine phosphate/N-(9Z-octadecenoyl)-ethanolamine phosphate, a potential physiological compound. Through dephosphorylation of these bioactive lipid mediators produces new bioactive compounds and may regulate signal transduction in different cellular processes. Indirectly regulates, for instance, cell cycle G1/S phase transition through its phospholipid phosphatase activity. The chain is Phospholipid phosphatase 2 from Bos taurus (Bovine).